A 174-amino-acid polypeptide reads, in one-letter code: NADH-quinone oxidoreductase subunit C (174 aa).

The protein belongs to the complex I 30 kDa subunit family. NDH-1 is composed of 14 different subunits. Subunits NuoB, C, D, E, F, and G constitute the peripheral sector of the complex.

Its subcellular location is the cell membrane. It carries out the reaction a quinone + NADH + 5 H(+)(in) = a quinol + NAD(+) + 4 H(+)(out). Functionally, NDH-1 shuttles electrons from NADH, via FMN and iron-sulfur (Fe-S) centers, to quinones in the respiratory chain. The immediate electron acceptor for the enzyme in this species is believed to be ubiquinone. Couples the redox reaction to proton translocation (for every two electrons transferred, four hydrogen ions are translocated across the cytoplasmic membrane), and thus conserves the redox energy in a proton gradient. The chain is NADH-quinone oxidoreductase subunit C from Roseiflexus sp. (strain RS-1).